A 118-amino-acid chain; its full sequence is Large ribosomal subunit protein mL53 (118 aa).

The segment at Ala99–Arg118 is disordered.

The protein belongs to the mitochondrion-specific ribosomal protein mL53 family. As to quaternary structure, component of the mitochondrial ribosome large subunit (39S) which comprises a 16S rRNA and about 50 distinct proteins.

It localises to the mitochondrion. The sequence is that of Large ribosomal subunit protein mL53 (Mrpl53) from Mus musculus (Mouse).